Here is a 774-residue protein sequence, read N- to C-terminus: Ion-translocating oxidoreductase complex subunit C (774 aa).

4Fe-4S ferredoxin-type domains lie at 368–398 and 408–437; these read ELTS…QQLQ and KCEE…VQYY. [4Fe-4S] cluster contacts are provided by cysteine 378, cysteine 381, cysteine 384, cysteine 388, cysteine 417, cysteine 420, cysteine 423, and cysteine 427. Positions 459 to 490 are enriched in basic and acidic residues; sequence ARFEEKKARMERDKAERENRFKQAAEDRRKEM. Disordered stretches follow at residues 459–496 and 533–774; these read ARFE…QGGS and AKQA…EEKD. Residues 533–545 are compositionally biased toward low complexity; the sequence is AKQAEAAQSGASE. The segment covering 550–572 has biased composition (basic and acidic residues); the sequence is EMAKLREERKRQARERKAQKGEV. Over residues 605–618 the composition is skewed to low complexity; it reads TESAAQPAQATPSS. 4 stretches are compositionally biased toward polar residues: residues 645 to 658, 686 to 698, 725 to 738, and 762 to 774; these read TEST…TPSS, ESAA…TPSS, TESA…TPSS, and QQSS…EEKD.

It belongs to the 4Fe4S bacterial-type ferredoxin family. RnfC subfamily. The complex is composed of six subunits: RnfA, RnfB, RnfC, RnfD, RnfE and RnfG. [4Fe-4S] cluster serves as cofactor.

Its subcellular location is the cell inner membrane. In terms of biological role, part of a membrane-bound complex that couples electron transfer with translocation of ions across the membrane. The polypeptide is Ion-translocating oxidoreductase complex subunit C (Vibrio cholerae serotype O1 (strain ATCC 39315 / El Tor Inaba N16961)).